The following is a 205-amino-acid chain: High frequency lysogenization protein HflD homolog (205 aa).

The protein belongs to the HflD family.

It is found in the cytoplasm. It localises to the cell inner membrane. The chain is High frequency lysogenization protein HflD homolog from Hahella chejuensis (strain KCTC 2396).